The primary structure comprises 164 residues: Protein SprT (164 aa).

In terms of domain architecture, SprT-like spans 14 to 156 (QQAETFFKRT…LCRRCREPLV (143 aa)). H69 lines the Zn(2+) pocket. The active site involves E70. H73 contacts Zn(2+).

Belongs to the SprT family. Requires Zn(2+) as cofactor.

It localises to the cytoplasm. This chain is Protein SprT, found in Pseudomonas savastanoi pv. phaseolicola (strain 1448A / Race 6) (Pseudomonas syringae pv. phaseolicola (strain 1448A / Race 6)).